A 172-amino-acid chain; its full sequence is Adenine phosphoribosyltransferase (172 aa).

The protein belongs to the purine/pyrimidine phosphoribosyltransferase family. As to quaternary structure, homodimer.

It is found in the cytoplasm. The enzyme catalyses AMP + diphosphate = 5-phospho-alpha-D-ribose 1-diphosphate + adenine. It participates in purine metabolism; AMP biosynthesis via salvage pathway; AMP from adenine: step 1/1. Catalyzes a salvage reaction resulting in the formation of AMP, that is energically less costly than de novo synthesis. The chain is Adenine phosphoribosyltransferase from Methanococcus maripaludis (strain C7 / ATCC BAA-1331).